The primary structure comprises 152 residues: Protein Smg homolog (152 aa).

It belongs to the Smg family.

This is Protein Smg homolog from Bordetella petrii (strain ATCC BAA-461 / DSM 12804 / CCUG 43448).